The sequence spans 470 residues: Acetyl-CoA decarbonylase/synthase complex subunit beta 2 (470 aa).

The [Ni-Fe-S] cluster site is built by Cys-189, Cys-192, Cys-278, and Cys-280.

This sequence belongs to the CdhC family. Monomer. The ACDS complex is made up of alpha, epsilon, beta, gamma and delta chains with a probable stoichiometry of (alpha(2)epsilon(2))(4)-beta(8)-(gamma(1)delta(1))(8) (Potential). Requires [Ni-Fe-S] cluster as cofactor.

The enzyme catalyses Co(I)-[corrinoid Fe-S protein] + acetyl-CoA + H(+) = methyl-Co(III)-[corrinoid Fe-S protein] + CO + CoA. It participates in one-carbon metabolism; methanogenesis from acetate. Functionally, part of a complex that catalyzes the reversible cleavage of acetyl-CoA, allowing growth on acetate as sole source of carbon and energy. The alpha-epsilon complex generates CO from CO(2), while the beta subunit (this protein) combines the CO with CoA and a methyl group to form acetyl-CoA. The methyl group, which is incorporated into acetyl-CoA, is transferred to the beta subunit by a corrinoid iron-sulfur protein (the gamma-delta complex). This is Acetyl-CoA decarbonylase/synthase complex subunit beta 2 (cdhC2) from Methanosarcina acetivorans (strain ATCC 35395 / DSM 2834 / JCM 12185 / C2A).